The following is a 328-amino-acid chain: Glucokinase (328 aa).

16-21 contributes to the ATP binding site; sequence ADIGGT.

Belongs to the bacterial glucokinase family.

Its subcellular location is the cytoplasm. The enzyme catalyses D-glucose + ATP = D-glucose 6-phosphate + ADP + H(+). The chain is Glucokinase from Neisseria meningitidis serogroup C (strain 053442).